We begin with the raw amino-acid sequence, 351 residues long: Histidinol-phosphate aminotransferase (351 aa).

N6-(pyridoxal phosphate)lysine is present on Lys-215.

Belongs to the class-II pyridoxal-phosphate-dependent aminotransferase family. Histidinol-phosphate aminotransferase subfamily. Pyridoxal 5'-phosphate is required as a cofactor.

The enzyme catalyses L-histidinol phosphate + 2-oxoglutarate = 3-(imidazol-4-yl)-2-oxopropyl phosphate + L-glutamate. It participates in amino-acid biosynthesis; L-histidine biosynthesis; L-histidine from 5-phospho-alpha-D-ribose 1-diphosphate: step 7/9. This is Histidinol-phosphate aminotransferase from Methanocorpusculum labreanum (strain ATCC 43576 / DSM 4855 / Z).